The chain runs to 468 residues: Chromosomal replication initiator protein DnaA (468 aa).

The tract at residues 1 to 90 (MTQEKWGLLC…NSPMRPARAA (90 aa)) is domain I, interacts with DnaA modulators. The interval 91–126 (RPAAAAAAAAAAVEAPQVSAPRATDTSDVLDGLQAA) is domain II. The tract at residues 127–348 (PLDPRFTFDS…GALTRLFAFA (222 aa)) is domain III, AAA+ region. ATP contacts are provided by Gly-171, Gly-173, Lys-174, and Thr-175. The domain IV, binds dsDNA stretch occupies residues 349 to 468 (SLVGREIDME…VEMLRRALEA (120 aa)).

This sequence belongs to the DnaA family. As to quaternary structure, oligomerizes as a right-handed, spiral filament on DNA at oriC.

It is found in the cytoplasm. Plays an essential role in the initiation and regulation of chromosomal replication. ATP-DnaA binds to the origin of replication (oriC) to initiate formation of the DNA replication initiation complex once per cell cycle. Binds the DnaA box (a 9 base pair repeat at the origin) and separates the double-stranded (ds)DNA. Forms a right-handed helical filament on oriC DNA; dsDNA binds to the exterior of the filament while single-stranded (ss)DNA is stabiized in the filament's interior. The ATP-DnaA-oriC complex binds and stabilizes one strand of the AT-rich DNA unwinding element (DUE), permitting loading of DNA polymerase. After initiation quickly degrades to an ADP-DnaA complex that is not apt for DNA replication. Binds acidic phospholipids. The chain is Chromosomal replication initiator protein DnaA from Ruegeria pomeroyi (strain ATCC 700808 / DSM 15171 / DSS-3) (Silicibacter pomeroyi).